Here is an 81-residue protein sequence, read N- to C-terminus: Putative membrane protein insertion efficiency factor (81 aa).

The protein belongs to the UPF0161 family.

The protein resides in the cell inner membrane. Could be involved in insertion of integral membrane proteins into the membrane. The sequence is that of Putative membrane protein insertion efficiency factor from Pseudomonas syringae pv. tomato (strain ATCC BAA-871 / DC3000).